A 596-amino-acid polypeptide reads, in one-letter code: Proline--tRNA ligase (596 aa).

Belongs to the class-II aminoacyl-tRNA synthetase family. ProS type 1 subfamily. In terms of assembly, homodimer.

It localises to the cytoplasm. The enzyme catalyses tRNA(Pro) + L-proline + ATP = L-prolyl-tRNA(Pro) + AMP + diphosphate. In terms of biological role, catalyzes the attachment of proline to tRNA(Pro) in a two-step reaction: proline is first activated by ATP to form Pro-AMP and then transferred to the acceptor end of tRNA(Pro). As ProRS can inadvertently accommodate and process non-cognate amino acids such as alanine and cysteine, to avoid such errors it has two additional distinct editing activities against alanine. One activity is designated as 'pretransfer' editing and involves the tRNA(Pro)-independent hydrolysis of activated Ala-AMP. The other activity is designated 'posttransfer' editing and involves deacylation of mischarged Ala-tRNA(Pro). The misacylated Cys-tRNA(Pro) is not edited by ProRS. This chain is Proline--tRNA ligase, found in Prochlorococcus marinus (strain NATL1A).